The following is an 87-amino-acid chain: MELKNSISDYTEAEFVQLLKEIEKENVAATDDVLDVLLEHFVKITEHPDGTDLIYYPSDNRDDSPEGIVKEIKEWRAANGKPGFKQG.

The protein belongs to the colicins ColE2/ColE8/ColE9 and pyocins S1/S2 family.

In terms of biological role, this protein is able to protect a cell, which harbors the plasmid ColE7 encoding colicin E7, against colicin E7, it binds specifically to the DNase-type colicin and inhibits its bactericidal activity. Dimeric ImmE7 may possess a RNase activity that cleaves its own mRNA at a specific site and thus autoregulates translational expression of the downstream ceiE7 gene as well as degradation of the upstream ceaE7 mRNA. This is Colicin-E7 immunity protein (imm) from Escherichia coli.